The sequence spans 738 residues: Coiled-coil domain-containing protein 142 (738 aa).

A disordered region spans residues 1 to 34 (MARASSSSGPLPPLANVPSSWAQPVGAGEERDEG). The stretch at 69–92 (ALQRLRATLLRLHREREQLLRARD) forms a coiled coil. The interval 682–704 (LSTLGGGGRGGGGGGGPGPSPEA) is disordered. Residues 685–698 (LGGGGRGGGGGGGP) show a composition bias toward gly residues.

In Mus musculus (Mouse), this protein is Coiled-coil domain-containing protein 142 (Ccdc142).